The chain runs to 146 residues: Single-stranded DNA-binding protein, mitochondrial (146 aa).

A mitochondrion-targeting transit peptide spans 1–22 (MQHTRRMLNPLLTGLRNLPARG). The SSB domain maps to 38–142 (VNTVTILGRV…IIADDVLFFR (105 aa)).

In terms of assembly, homotetramer. As to expression, uniformly distributed in the early embryo. High levels detected in the anterior and posterior midgut primordia of stage 12 embryos. In larvae, high levels were detected in proliferating tissues including the CNS and digestive tract. In adults, highly expressed in the CNS, digestive tract and ovary.

Its subcellular location is the mitochondrion. Functionally, binds preferentially and cooperatively to pyrimidine rich single-stranded DNA (ss-DNA). Required to maintain the copy number of mitochondrial DNA (mtDNA) and plays crucial roles during mtDNA replication that stimulate activity of the gamma complex polymerase PolG1/tam at the replication fork. Promotes PolG1 activity largely by organizing the template DNA and eliminating secondary structures to favor ss-DNA conformations that facilitate PolG1 activity. The sequence is that of Single-stranded DNA-binding protein, mitochondrial (mtSSB) from Drosophila melanogaster (Fruit fly).